The sequence spans 549 residues: Cell death protein 4 (549 aa).

The CARD domain maps to 1–91 (MLCEIECRAL…HLADFLEDYI (91 aa)). Tyrosine 131, glycine 162, glycine 164, lysine 165, serine 166, valine 167, arginine 273, threonine 367, and tyrosine 369 together coordinate ATP. In terms of domain architecture, NB-ARC spans 133–417 (REYHVDRVIK…KLWSCVIPVD (285 aa)). Serine 166 lines the Mg(2+) pocket.

Associates as an asymmetric homodimer with ced-9. Only one ced-4 molecule within the dimer interacts directly with ced-9. Upon release from ced-9, forms a multimer, known as the apoptosome, and interacts with ced-3; the interaction results in ced-3 autoproteolytic cleavage and activation. Multiple oligomeric states of the apoptosome are observed including hexamers, heptamers and octamers. The hexamers likely represent a pre-mature state of the apoptosome and may contribute to the regulation of ced-3 activation. The apoptosome multimer also interacts with two processed ced-3 to form a stable holoenzyme. Interacts with sex-determining protein fem-1. May form a complex composed of ced-3, ced-4 and mac-1 or of ced-9, ced-4 and mac-1. Within the complex, interacts with mac-1.

Its subcellular location is the mitochondrion. The protein resides in the cytoplasm. It is found in the perinuclear region. Component of the egl-1, ced-9, ced-4 and ced-3 apoptotic signaling cascade required for the initiation of programmed cell death in cells fated to die during embryonic and postembryonic development. During oogenesis, required for germline apoptosis downstream of ced-9 and upstream of ced-3 but independently of egl-1. May regulate germline apoptosis in response to DNA damage, probably downstream of let-60/ras and mpk-1 pathway. Regulates CEP neuron apoptosis in response to high Al(3+) levels. During male tail morphogenesis, promotes apoptosis of the tail-spike cell upstream of ced-3 but independently of egl-1 and ced-9. May play a role in sex-specific cell apoptosis, probably by promoting ced-3-mediated cleavage of sex-determining protein fem-1. During larval development, required for the elimination of transient presynaptic components downstream of egl-1 and ced-9 and upstream of ced-3 apoptotic pathway. Downstream of calreticulin crt-1 and upstream of ced-3 and independently of egl-1 and ced-9, plays a role in the initial steps of axonal regrowth following axotomy. Together with ain-1, a component of the miRNA-induced-silencing complex (miRISC), and probably upstream of ced-3, regulates temporal cell fate patterning during larval development. May play a role in resistance to S.typhimurium-mediated infection. Its function is as follows. Plays a major role in programmed cell death. egl-1 binds to and directly inhibits the activity of ced-9, releasing the cell death activator ced-4 from a ced-9/ced-4-containing protein complex and allowing ced-4 to induce caspase ced-3 autoproteolytic cleavage and activation. Also forms a holoenzyme with processed ced-3 enhancing ced-3 activity. In terms of biological role, prevents programmed cell death. In Caenorhabditis elegans, this protein is Cell death protein 4 (ced-4).